A 319-amino-acid polypeptide reads, in one-letter code: Putative G-protein coupled receptor B0244.7 (319 aa).

A glycan (N-linked (GlcNAc...) asparagine) is linked at Asn-28. Helical transmembrane passes span 49–69 (AIFI…IYIF), 107–127 (LPVI…FIIF), 131–151 (SFLS…IAVV), 166–186 (VLLI…CGIV), 206–226 (GPVL…CLVI), and 261–281 (LFAG…SAII).

Belongs to the G-protein coupled receptor 1 family. B0244 subfamily.

Its subcellular location is the cell membrane. This chain is Putative G-protein coupled receptor B0244.7, found in Caenorhabditis elegans.